Here is a 931-residue protein sequence, read N- to C-terminus: Protocadherin gamma-B2 (931 aa).

The N-terminal stretch at 1–30 (MKASSGRCGLVRWLQVLLPFLLSLFPGALP) is a signal peptide. 6 Cadherin domains span residues 31 to 133 (VQIR…TPLF), 134 to 242 (KQTK…PPVF), 243 to 347 (SQDV…APEV), 348 to 452 (IVTS…APVF), 453 to 562 (QQTS…APRV), and 570 to 675 (DGSA…LPDL). Residues 31–691 (VQIRYSIPEE…SDPQAKLQFY (661 aa)) lie on the Extracellular side of the membrane. N-linked (GlcNAc...) asparagine glycans are attached at residues N419 and N545. Residues 692–712 (LVVALALISVLFFLAVILAIS) form a helical membrane-spanning segment. At 713-931 (LRLRLSSRSD…KKKSGKKEKK (219 aa)) the chain is on the cytoplasmic side. Disordered stretches follow at residues 814–840 (DWRF…WPNN) and 901–931 (ATLT…KEKK). Over residues 815 to 840 (WRFSQAQRPGTSGSQNGDDTGTWPNN) the composition is skewed to polar residues. Over residues 921–931 (NKKKSGKKEKK) the composition is skewed to basic residues.

The protein resides in the cell membrane. Potential calcium-dependent cell-adhesion protein. May be involved in the establishment and maintenance of specific neuronal connections in the brain. In Homo sapiens (Human), this protein is Protocadherin gamma-B2 (PCDHGB2).